A 342-amino-acid chain; its full sequence is tRNA N6-adenosine threonylcarbamoyltransferase (342 aa).

Fe cation contacts are provided by His-119 and His-123. Substrate-binding positions include 142 to 146 (VVSGG), Asp-175, Gly-188, and Asn-282. Asp-310 is a Fe cation binding site.

It belongs to the KAE1 / TsaD family. It depends on Fe(2+) as a cofactor.

Its subcellular location is the cytoplasm. The enzyme catalyses L-threonylcarbamoyladenylate + adenosine(37) in tRNA = N(6)-L-threonylcarbamoyladenosine(37) in tRNA + AMP + H(+). Required for the formation of a threonylcarbamoyl group on adenosine at position 37 (t(6)A37) in tRNAs that read codons beginning with adenine. Is involved in the transfer of the threonylcarbamoyl moiety of threonylcarbamoyl-AMP (TC-AMP) to the N6 group of A37, together with TsaE and TsaB. TsaD likely plays a direct catalytic role in this reaction. This is tRNA N6-adenosine threonylcarbamoyltransferase from Moorella thermoacetica (strain ATCC 39073 / JCM 9320).